We begin with the raw amino-acid sequence, 469 residues long: Calcium/calmodulin-dependent protein kinase type IV (469 aa).

A phosphoserine; by autocatalysis mark is found at Ser-11 and Ser-12. In terms of domain architecture, Protein kinase spans 42–296 (FEVESELGRG…TFQALQHPWV (255 aa)). ATP is bound by residues 48-56 (LGRGATSIV) and Lys-71. Thr-53 carries an O-linked (GlcNAc) threonine glycan. O-linked (GlcNAc) serine glycosylation is present at Ser-54. O-linked (GlcNAc) serine glycosylation occurs at Ser-133. The Proton acceptor role is filled by Asp-160. O-linked (GlcNAc) serine glycosylation occurs at Ser-185. Position 196 is a phosphothreonine (Thr-196). The tract at residues 297–336 (TGKAANFVHMDTAQKKLQEFNARRKLKAAVKAVVASSRLG) is autoinhibitory domain. Residues 302–319 (NFVHMDTAQKKLQEFNAR) are PP2A-binding. Residues 318–337 (ARRKLKAAVKAVVASSRLGS) are calmodulin-binding. Phosphoserine; by autocatalysis is present on Ser-332. A disordered region spans residues 336–469 (GSASSSHTSI…PQQDAIQPEY (134 aa)). Ser-337 bears the Phosphoserine mark. 3 O-linked (GlcNAc) serine glycosylation sites follow: Ser-340, Ser-341, and Ser-352. A compositionally biased stretch (basic and acidic residues) spans 360-374 (DAKDSTDLLGKKMQE). Over residues 375 to 388 (EDQEEDQVEAEASA) the composition is skewed to acidic residues. Basic and acidic residues predominate over residues 389–409 (DEMRKLQSEEVEKDAGVKEEE). Acidic residues predominate over residues 417–426 (DPEDELETDD). Over residues 427–441 (PEMKRDSEEKLKSVE) the composition is skewed to basic and acidic residues. Phosphoserine occurs at positions 433 and 439. Over residues 442 to 453 (EEMDPMTEEEAP) the composition is skewed to acidic residues.

The protein belongs to the protein kinase superfamily. CAMK Ser/Thr protein kinase family. CaMK subfamily. Monomer. Interacts with protein phosphatase 2A (PPP2CA/PPP2CB); the interaction is mutually exclusive with binding to Ca(2+)/calmodulin. Phosphorylated by CaMKK1 and CaMKK2 on Thr-196. Dephosphorylated by protein phosphatase 2A. Autophosphorylated on Ser-11 and Ser-12. In terms of processing, glycosylation at Ser-185 modulates the phosphorylation of CaMK4 at Thr-196 and negatively regulates its activity toward CREB1 in basal conditions and during early inomycin stimulation. In terms of tissue distribution, expressed in brain and testis.

The protein localises to the cytoplasm. The protein resides in the nucleus. It catalyses the reaction L-seryl-[protein] + ATP = O-phospho-L-seryl-[protein] + ADP + H(+). It carries out the reaction L-threonyl-[protein] + ATP = O-phospho-L-threonyl-[protein] + ADP + H(+). Activated by Ca(2+)/calmodulin. Binding of calmodulin results in conformational change that relieves intrasteric autoinhibition and allows phosphorylation of Thr-196 within the activation loop by CaMKK1 or CaMKK2. Phosphorylation of Thr-196 results in a 10-20-fold increase in total activity to generate Ca(2+)/calmodulin-independent activity. Autophosphorylation of the N-terminus Ser-11 and Ser-12 is required for full activation. Inactivated by protein phosphatase 2A (PPP2CA/PPP2CB) which dephosphorylates Thr-196, thereby terminating autonomous activity and helping to maintain the enzyme in its autoinhibited state. Its function is as follows. Calcium/calmodulin-dependent protein kinase that operates in the calcium-triggered CaMKK-CaMK4 signaling cascade and regulates, mainly by phosphorylation, the activity of several transcription activators, such as CREB1, MEF2D, JUN and RORA, which play pivotal roles in immune response, inflammation, and memory consolidation. In the thymus, regulates the CD4(+)/CD8(+) double positive thymocytes selection threshold during T-cell ontogeny. In CD4 memory T-cells, is required to link T-cell antigen receptor (TCR) signaling to the production of IL2, IFNG and IL4 (through the regulation of CREB and MEF2). Regulates the differentiation and survival phases of osteoclasts and dendritic cells (DCs). Mediates DCs survival by linking TLR4 and the regulation of temporal expression of BCL2. Phosphorylates the transcription activator CREB1 on 'Ser-133' in hippocampal neuron nuclei and contribute to memory consolidation and long term potentiation (LTP) in the hippocampus. Can activate the MAP kinases MAPK1/ERK2, MAPK8/JNK1 and MAPK14/p38 and stimulate transcription through the phosphorylation of ELK1 and ATF2. Can also phosphorylate in vitro CREBBP, PRM2, MEF2A and STMN1/OP18. May be involved in spermatogenesis. The protein is Calcium/calmodulin-dependent protein kinase type IV (Camk4) of Mus musculus (Mouse).